The sequence spans 90 residues: Probable Fe(2+)-trafficking protein (90 aa).

It belongs to the Fe(2+)-trafficking protein family.

In terms of biological role, could be a mediator in iron transactions between iron acquisition and iron-requiring processes, such as synthesis and/or repair of Fe-S clusters in biosynthetic enzymes. The chain is Probable Fe(2+)-trafficking protein from Methylococcus capsulatus (strain ATCC 33009 / NCIMB 11132 / Bath).